Reading from the N-terminus, the 339-residue chain is RxLR effector protein SFI4 (339 aa).

The signal sequence occupies residues 1 to 24; that stretch reads MRVLRVTFLWALLLLVAFSASVYA. Residues 51-74 carry the RxLR-dEER motif; sequence RGLRNSGMKLNDAKDFKGAIAKLR. 4 TPR repeats span residues 106-139, 190-223, 232-265, and 274-307; these read AQIL…VEKI, IEAS…QNGE, AELY…FRQR, and AFSL…AVQI.

Belongs to the RxLR effector family.

The protein resides in the secreted. It localises to the host nucleus. It is found in the host cytoplasm. Effector that suppresses flg22-induced post-translational MAP kinase activation in tomato but not in Arabidopsis. The perception of highly conserved pathogen- or microbe-associated molecular patterns (PAMPs/MAMPs), such as flg22, triggers converging signaling pathways recruiting MAP kinase cascades and inducing transcriptional re-programming, yielding a generic antimicrobial response. This chain is RxLR effector protein SFI4, found in Phytophthora infestans (strain T30-4) (Potato late blight agent).